The following is a 632-amino-acid chain: MGIEWEGVKVEIGELVVEGDSESEMEGPTRRELLPWDRTLASVYDLAVVPGDSEEERREVARTIVTLCCEGTAGLISTARLVVELLRQTGENLDPGFDAETPLPLYETLLGSSPECADDLEAGLSYAERELTSSVSELLRSHSLKGYESVAMHAGAIGLLAMEIADATPSTLMEVTESEEVFEIGTDDLPRRPTVLLVGHLPLLGHIITEELGTLARQVELVGLTHTAWPNREDHVRVVGPLSMYHEYLSSGFADVVVVDGACPGEDVIEAAREGGSKLVATVGARVADLLDVTDYPVEEAVEVLVTEEDAVYVEEPIKAVEIAAWAALRVEGSRDRREPPRRAFRVGPPTRLTDVVIRNVGVPVVAGNIPGIVVLVSCPEKSADVEEPAKIAEVLLERGYLVLVPGCLAVALGSYLDDDGKTLYERYPDTLLNTGPCTSAAHLVGACIRVGVIFGKLPIRGEFVRVADYVLNRVGACVIAWGGEYSEHLVSAAYGVTRWGIPVVLGPDPEAGSLLVEKNPKVIDACSGEEVEDPTPEHLRCVVSDWKEAAITAARLCMRPNDTPEGRQNKVESYVELYRELYGELPPDLDLLIRDESDIPVTLRSEIRELLEETGWTPRSRASDPTLLPEG.

6 residues coordinate [Ni-4Fe-4S] cluster: His-200, His-226, Cys-263, Cys-379, Cys-408, and Cys-438.

It belongs to the Ni-containing carbon monoxide dehydrogenase family.

Its function is as follows. Part of the ACDS complex that catalyzes the reversible cleavage of acetyl-CoA, allowing autotrophic growth from CO(2). The alpha-epsilon subcomponent functions as a carbon monoxide dehydrogenase. The sequence is that of Putative acetyl-CoA decarbonylase/synthase complex subunit alpha-like (cdhA2) from Methanopyrus kandleri (strain AV19 / DSM 6324 / JCM 9639 / NBRC 100938).